Reading from the N-terminus, the 307-residue chain is Agmatinase (307 aa).

Mn(2+) contacts are provided by His-128, Asp-151, His-153, Asp-155, Asp-232, and Asp-234.

The protein belongs to the arginase family. Agmatinase subfamily. Mn(2+) serves as cofactor.

It carries out the reaction agmatine + H2O = urea + putrescine. The protein operates within amine and polyamine biosynthesis; putrescine biosynthesis via agmatine pathway; putrescine from agmatine: step 1/1. Catalyzes the formation of putrescine from agmatine. The chain is Agmatinase from Neisseria meningitidis serogroup A / serotype 4A (strain DSM 15465 / Z2491).